The primary structure comprises 571 residues: Proline--tRNA ligase (571 aa).

Belongs to the class-II aminoacyl-tRNA synthetase family. ProS type 1 subfamily. As to quaternary structure, homodimer.

It localises to the cytoplasm. It catalyses the reaction tRNA(Pro) + L-proline + ATP = L-prolyl-tRNA(Pro) + AMP + diphosphate. Functionally, catalyzes the attachment of proline to tRNA(Pro) in a two-step reaction: proline is first activated by ATP to form Pro-AMP and then transferred to the acceptor end of tRNA(Pro). As ProRS can inadvertently accommodate and process non-cognate amino acids such as alanine and cysteine, to avoid such errors it has two additional distinct editing activities against alanine. One activity is designated as 'pretransfer' editing and involves the tRNA(Pro)-independent hydrolysis of activated Ala-AMP. The other activity is designated 'posttransfer' editing and involves deacylation of mischarged Ala-tRNA(Pro). The misacylated Cys-tRNA(Pro) is not edited by ProRS. This is Proline--tRNA ligase from Vibrio parahaemolyticus serotype O3:K6 (strain RIMD 2210633).